Reading from the N-terminus, the 77-residue chain is uncharacterized protein (77 aa).

This is an uncharacterized protein from Treponema pallidum (strain Nichols).